Reading from the N-terminus, the 206-residue chain is Ribosomal RNA small subunit methyltransferase G (206 aa).

Residues G74, L79, 125-126 (VE), and R140 contribute to the S-adenosyl-L-methionine site.

The protein belongs to the methyltransferase superfamily. RNA methyltransferase RsmG family.

It localises to the cytoplasm. It carries out the reaction guanosine(527) in 16S rRNA + S-adenosyl-L-methionine = N(7)-methylguanosine(527) in 16S rRNA + S-adenosyl-L-homocysteine. In terms of biological role, specifically methylates the N7 position of guanine in position 527 of 16S rRNA. The protein is Ribosomal RNA small subunit methyltransferase G of Shewanella sp. (strain ANA-3).